Consider the following 555-residue polypeptide: Splicing factor U2af large subunit A (555 aa).

Residues methionine 1–threonine 165 are disordered. Basic and acidic residues-rich tracts occupy residues isoleucine 23 to arginine 81 and arginine 90 to aspartate 127. The span at serine 143–arginine 155 shows a compositional bias: basic residues. 3 RRM domains span residues arginine 221–aspartate 304, aspartate 341–glutamine 419, and glutamate 460–asparagine 546.

The protein belongs to the splicing factor SR family. In terms of tissue distribution, expressed in stems, leaves and apical buds.

It localises to the nucleus. Functionally, necessary for the splicing of pre-mRNA. Binds to the U -enriched regions of plant introns. The polypeptide is Splicing factor U2af large subunit A (U2AF65A) (Nicotiana plumbaginifolia (Leadwort-leaved tobacco)).